The following is a 524-amino-acid chain: Cytochrome P450 monooxygenase lnaC (524 aa).

A helical membrane pass occupies residues 16-36; that stretch reads ALAVSCIAVSLFLLSPWIAYA. An N-linked (GlcNAc...) asparagine glycan is attached at N150. Residue C471 participates in heme binding.

It belongs to the cytochrome P450 family. Heme serves as cofactor.

It is found in the membrane. It functions in the pathway secondary metabolite biosynthesis. Its function is as follows. Cytochrome P450 monooxygenase; part of the lna gene cluster that mediates the biosynthesis of diastereomeric piperazines. Lna and lnb clusters encode sets of enzymes that produce overlapping sets of previously undescribed metabolites such as piperazinomycin-like metabolites or morpholine. The lna and lnb biosynthetic pathways appear to be part of a signaling network that controls the formation of sclerotia, a resilient overwintering structure. One primary function of the non-canonical nonribosomal peptide synthetases lnaA and lnbA consists in the reduction of L-tyrosine. The presence in the clusters of tailoring enzymes such as the oxidoreductases lnaB, lnbB, lnaE or lnbE, as well as of the cytochrome P450 monooxygenases lnaC, lnaD, or lnbC, might explain formation of various diastereomeric piperazines. The chain is Cytochrome P450 monooxygenase lnaC from Aspergillus flavus (strain ATCC 200026 / FGSC A1120 / IAM 13836 / NRRL 3357 / JCM 12722 / SRRC 167).